The sequence spans 446 residues: Glucose-6-phosphate isomerase (446 aa).

E287 serves as the catalytic Proton donor. Residues H308 and K422 contribute to the active site.

This sequence belongs to the GPI family.

It localises to the cytoplasm. It carries out the reaction alpha-D-glucose 6-phosphate = beta-D-fructose 6-phosphate. The protein operates within carbohydrate biosynthesis; gluconeogenesis. It functions in the pathway carbohydrate degradation; glycolysis; D-glyceraldehyde 3-phosphate and glycerone phosphate from D-glucose: step 2/4. Catalyzes the reversible isomerization of glucose-6-phosphate to fructose-6-phosphate. The polypeptide is Glucose-6-phosphate isomerase (Lactobacillus helveticus (strain DPC 4571)).